Reading from the N-terminus, the 330-residue chain is Phenylalanine--tRNA ligase alpha subunit (330 aa).

Glutamate 254 lines the Mg(2+) pocket.

The protein belongs to the class-II aminoacyl-tRNA synthetase family. Phe-tRNA synthetase alpha subunit type 1 subfamily. As to quaternary structure, tetramer of two alpha and two beta subunits. It depends on Mg(2+) as a cofactor.

The protein localises to the cytoplasm. The enzyme catalyses tRNA(Phe) + L-phenylalanine + ATP = L-phenylalanyl-tRNA(Phe) + AMP + diphosphate + H(+). The protein is Phenylalanine--tRNA ligase alpha subunit (pheS) of Neisseria meningitidis serogroup A / serotype 4A (strain DSM 15465 / Z2491).